The primary structure comprises 462 residues: Integrator complex subunit 12 (462 aa).

Residues 42-132 (GIDSSYRPSQ…PETQSSPITV (91 aa)) are disordered. Positions 59–86 (ISSTKNISIKQEPKISSSLPSGNNNGKV) are enriched in polar residues. Lys68 is covalently cross-linked (Glycyl lysine isopeptide (Lys-Gly) (interchain with G-Cter in SUMO2)). Basic and acidic residues predominate over residues 88 to 124 (TTEKVKKEAEKRPADKMKSDITEGVDIPKKPRLEKPE). Phosphoserine is present on Ser128. A PHD-type zinc finger spans residues 159–215 (GLACVVCRQMMVASGNQLVECQECHNLYHRDCHKPQVTDKEANDPRLVWYCARCTRQ). Lys254 participates in a covalent cross-link: Glycyl lysine isopeptide (Lys-Gly) (interchain with G-Cter in SUMO2). Residues 301-328 (SSAGPSTAKLSSTTQNNTGKPATSSANQ) show a composition bias toward polar residues. Residues 301 to 462 (SSAGPSTAKL…KKAAQKKLKK (162 aa)) form a disordered region. 2 stretches are compositionally biased toward low complexity: residues 347–358 (KIGSNNSTTPTV) and 382–437 (VSKV…GPTS). A compositionally biased stretch (basic residues) spans 449–462 (QMVKKKAAQKKLKK).

This sequence belongs to the Integrator subunit 12 family. In terms of assembly, component of the Integrator complex, composed of core subunits INTS1, INTS2, INTS3, INTS4, INTS5, INTS6, INTS7, INTS8, INTS9/RC74, INTS10, INTS11/CPSF3L, INTS12, INTS13, INTS14 and INTS15. The core complex associates with protein phosphatase 2A subunits PPP2CA and PPP2R1A, to form the Integrator-PP2A (INTAC) complex. Dephosphorylated at Ser-128 by the PNUTS-PP1 complex, promoting RNA polymerase II transcription pause-release.

The protein resides in the nucleus. Its function is as follows. Component of the integrator complex, a multiprotein complex that terminates RNA polymerase II (Pol II) transcription in the promoter-proximal region of genes. The integrator complex provides a quality checkpoint during transcription elongation by driving premature transcription termination of transcripts that are unfavorably configured for transcriptional elongation: the complex terminates transcription by (1) catalyzing dephosphorylation of the C-terminal domain (CTD) of Pol II subunit POLR2A/RPB1 and SUPT5H/SPT5, (2) degrading the exiting nascent RNA transcript via endonuclease activity and (3) promoting the release of Pol II from bound DNA. The integrator complex is also involved in terminating the synthesis of non-coding Pol II transcripts, such as enhancer RNAs (eRNAs), small nuclear RNAs (snRNAs), telomerase RNAs and long non-coding RNAs (lncRNAs). Mediates recruitment of cytoplasmic dynein to the nuclear envelope, probably as component of the integrator complex. In Homo sapiens (Human), this protein is Integrator complex subunit 12.